Here is a 497-residue protein sequence, read N- to C-terminus: Cytochrome P450 monooxygenase cicH (497 aa).

Residues 2–19 (AILVRLFFALFVVSVYFF) form a helical membrane-spanning segment. Cysteine 439 serves as a coordination point for heme. An N-linked (GlcNAc...) asparagine glycan is attached at asparagine 443.

This sequence belongs to the cytochrome P450 family. Heme serves as cofactor.

The protein resides in the membrane. Its pathway is phytotoxin biosynthesis. Its function is as follows. Cytochrome P450 monooxygenase; part of the gene cluster that mediates the biosynthesis of cichorine, a phytotoxin active against knapweed, corn, and soybeans. The first step in the pathway is performed by the non-reducing polyketide synthase pkbA that condenses one acetyl-CoA starter unit with 3 malonyl-CoA units. PkbA also catalyzes one methylation step to produce 3-methylorsellinate. The nonribosomal peptide synthase-like protein cicB, the cytochrome P450 monooxygenase cicH and the O-methyltransferase cicE are involved in the conversion of 3-methylorsellinate into nidulol. CicB converts 3-methylorsellinate to a yet unidentified intermediate, cicH may play a ring-closing role for cichorine and cicE is plausibly responsible for the methylation of one of the phenol groups. The oxidoreductase cicC acts downstream with still unidentified enzymes to further convert nidulol into cichorine. This chain is Cytochrome P450 monooxygenase cicH, found in Emericella nidulans (strain FGSC A4 / ATCC 38163 / CBS 112.46 / NRRL 194 / M139) (Aspergillus nidulans).